Here is a 338-residue protein sequence, read N- to C-terminus: Tryptophan--tRNA ligase (338 aa).

ATP is bound by residues 11 to 13 (QPS) and 19 to 20 (GN). Residues 12 to 20 (PSGELSIGN) carry the 'HIGH' region motif. Aspartate 135 contributes to the L-tryptophan binding site. Residues 147 to 149 (GSD), valine 189, and 198 to 202 (KMSKS) each bind ATP. The 'KMSKS' region motif lies at 198–202 (KMSKS).

The protein belongs to the class-I aminoacyl-tRNA synthetase family. In terms of assembly, homodimer.

The protein localises to the cytoplasm. The catalysed reaction is tRNA(Trp) + L-tryptophan + ATP = L-tryptophyl-tRNA(Trp) + AMP + diphosphate + H(+). In terms of biological role, catalyzes the attachment of tryptophan to tRNA(Trp). The chain is Tryptophan--tRNA ligase from Vibrio cholerae serotype O1 (strain ATCC 39315 / El Tor Inaba N16961).